A 360-amino-acid chain; its full sequence is Phospho-N-acetylmuramoyl-pentapeptide-transferase (360 aa).

Helical transmembrane passes span 21–41 (YVTFRAILGLMTALVFCLWWG), 74–94 (MGGILILAGIFISVLLWGDLG), 97–117 (YVWVVLFVLASFGLIGFIDDY), 135–155 (ILQSLAAIIIAFYLYASADTV), 168–188 (IMPQMGAFFIVLAYFTIVGSS), 199–219 (GLAIMPTVMVAAAFALIAYLS), 236–256 (AGELVIVCTAIVGAGLGFLWF), 263–283 (VFMGDVGSLALGAALGAIAVL), 288–308 (ILLVIMGGVFVMETVSVILQV), and 338–358 (VIVRFWIISLFLVMLGLATLK).

This sequence belongs to the glycosyltransferase 4 family. MraY subfamily. Mg(2+) is required as a cofactor.

The protein localises to the cell inner membrane. The catalysed reaction is UDP-N-acetyl-alpha-D-muramoyl-L-alanyl-gamma-D-glutamyl-meso-2,6-diaminopimeloyl-D-alanyl-D-alanine + di-trans,octa-cis-undecaprenyl phosphate = di-trans,octa-cis-undecaprenyl diphospho-N-acetyl-alpha-D-muramoyl-L-alanyl-D-glutamyl-meso-2,6-diaminopimeloyl-D-alanyl-D-alanine + UMP. It participates in cell wall biogenesis; peptidoglycan biosynthesis. In terms of biological role, catalyzes the initial step of the lipid cycle reactions in the biosynthesis of the cell wall peptidoglycan: transfers peptidoglycan precursor phospho-MurNAc-pentapeptide from UDP-MurNAc-pentapeptide onto the lipid carrier undecaprenyl phosphate, yielding undecaprenyl-pyrophosphoryl-MurNAc-pentapeptide, known as lipid I. The protein is Phospho-N-acetylmuramoyl-pentapeptide-transferase of Shewanella violacea (strain JCM 10179 / CIP 106290 / LMG 19151 / DSS12).